The following is a 559-amino-acid chain: Membrane protein insertase YidC (559 aa).

The chain crosses the membrane as a helical span at residues 7 to 24; the sequence is ILWVIFSMSLVLLYDNWQ. Composition is skewed to low complexity over residues 45–55 and 63–82; these read APAASGAAAQG and QPATGTSAAPAAGAAPQAAA. Positions 45 to 82 are disordered; it reads APAASGAAAQGDVPKANVQPATGTSAAPAAGAAPQAAA. The next 5 helical transmembrane spans lie at 338–358, 364–384, 434–454, 472–492, and 507–527; these read LELVKDYGWLTILAKPLFWLL, FLGNWGWSIIALTVLIKLVFF, LGGCLPIVIQIPVFIALYWVL, LSVPDPFYILPIVMAVSMFVQ, and VMMIMPLVFSVMFFFFPAGLV.

The protein belongs to the OXA1/ALB3/YidC family. Type 1 subfamily. As to quaternary structure, interacts with the Sec translocase complex via SecD. Specifically interacts with transmembrane segments of nascent integral membrane proteins during membrane integration.

It is found in the cell inner membrane. In terms of biological role, required for the insertion and/or proper folding and/or complex formation of integral membrane proteins into the membrane. Involved in integration of membrane proteins that insert both dependently and independently of the Sec translocase complex, as well as at least some lipoproteins. Aids folding of multispanning membrane proteins. The sequence is that of Membrane protein insertase YidC from Cupriavidus taiwanensis (strain DSM 17343 / BCRC 17206 / CCUG 44338 / CIP 107171 / LMG 19424 / R1) (Ralstonia taiwanensis (strain LMG 19424)).